A 114-amino-acid chain; its full sequence is T cell receptor beta variable 9 (114 aa).

Residues 1 to 21 (MGFRLLCCVAFCLLGAGPVDS) form the signal peptide. Residues 22 to 114 (GVTQTPKHLI…SALYFCASSV (93 aa)) enclose the Ig-like domain. Residues Cys42 and Cys110 are joined by a disulfide bond. Asn96 is a glycosylation site (N-linked (GlcNAc...) asparagine).

As to quaternary structure, alpha-beta TR is a heterodimer composed of an alpha and beta chain; disulfide-linked. The alpha-beta TR is associated with the transmembrane signaling CD3 coreceptor proteins to form the TR-CD3 (TcR or TCR). The assembly of alpha-beta TR heterodimers with CD3 occurs in the endoplasmic reticulum where a single alpha-beta TR heterodimer associates with one CD3D-CD3E heterodimer, one CD3G-CD3E heterodimer and one CD247 homodimer forming a stable octameric structure. CD3D-CD3E and CD3G-CD3E heterodimers preferentially associate with TR alpha and TR beta chains, respectively. The association of the CD247 homodimer is the last step of TcR assembly in the endoplasmic reticulum and is required for transport to the cell surface.

The protein localises to the cell membrane. Functionally, v region of the variable domain of T cell receptor (TR) beta chain that participates in the antigen recognition. Alpha-beta T cell receptors are antigen specific receptors which are essential to the immune response and are present on the cell surface of T lymphocytes. Recognize peptide-major histocompatibility (MH) (pMH) complexes that are displayed by antigen presenting cells (APC), a prerequisite for efficient T cell adaptive immunity against pathogens. Binding of alpha-beta TR to pMH complex initiates TR-CD3 clustering on the cell surface and intracellular activation of LCK that phosphorylates the ITAM motifs of CD3G, CD3D, CD3E and CD247 enabling the recruitment of ZAP70. In turn ZAP70 phosphorylates LAT, which recruits numerous signaling molecules to form the LAT signalosome. The LAT signalosome propagates signal branching to three major signaling pathways, the calcium, the mitogen-activated protein kinase (MAPK) kinase and the nuclear factor NF-kappa-B (NF-kB) pathways, leading to the mobilization of transcription factors that are critical for gene expression and essential for T cell growth and differentiation. The T cell repertoire is generated in the thymus, by V-(D)-J rearrangement. This repertoire is then shaped by intrathymic selection events to generate a peripheral T cell pool of self-MH restricted, non-autoaggressive T cells. Post-thymic interaction of alpha-beta TR with the pMH complexes shapes TR structural and functional avidity. The polypeptide is T cell receptor beta variable 9 (Homo sapiens (Human)).